The primary structure comprises 503 residues: Aromatase (503 aa).

A run of 2 helical transmembrane segments spans residues Glu19–Trp39 and Phe53–Ala73. 2 residues coordinate substrate: Asp309 and Met374. Cys437 lines the heme pocket.

The protein belongs to the cytochrome P450 family. Requires heme as cofactor.

Its subcellular location is the endoplasmic reticulum membrane. The protein resides in the microsome membrane. The catalysed reaction is testosterone + 3 reduced [NADPH--hemoprotein reductase] + 3 O2 = 17beta-estradiol + formate + 3 oxidized [NADPH--hemoprotein reductase] + 4 H2O + 4 H(+). It carries out the reaction androst-4-ene-3,17-dione + 3 reduced [NADPH--hemoprotein reductase] + 3 O2 = estrone + formate + 3 oxidized [NADPH--hemoprotein reductase] + 4 H2O + 4 H(+). The enzyme catalyses androst-4-ene-3,17-dione + reduced [NADPH--hemoprotein reductase] + O2 = 19-hydroxyandrost-4-ene-3,17-dione + oxidized [NADPH--hemoprotein reductase] + H2O + H(+). It catalyses the reaction 19-hydroxyandrost-4-ene-3,17-dione + reduced [NADPH--hemoprotein reductase] + O2 = 19-oxo-androst-4-ene-3,17-dione + oxidized [NADPH--hemoprotein reductase] + 2 H2O + H(+). The catalysed reaction is 19-oxo-androst-4-ene-3,17-dione + reduced [NADPH--hemoprotein reductase] + O2 = estrone + formate + oxidized [NADPH--hemoprotein reductase] + H2O + 2 H(+). It carries out the reaction estrone + reduced [NADPH--hemoprotein reductase] + O2 = 2-hydroxyestrone + oxidized [NADPH--hemoprotein reductase] + H2O + H(+). The enzyme catalyses 17beta-hydroxy-5alpha-androstan-3-one + reduced [NADPH--hemoprotein reductase] + O2 = 17beta,19-dihydroxy-3-oxo-5alpha-androstanone + oxidized [NADPH--hemoprotein reductase] + H2O + H(+). It catalyses the reaction 17beta,19-dihydroxy-3-oxo-5alpha-androstanone + reduced [NADPH--hemoprotein reductase] + O2 = 17beta-hydroxy-3,19-dioxo-5alpha-androstanone + oxidized [NADPH--hemoprotein reductase] + 2 H2O + H(+). The catalysed reaction is 17beta-hydroxy-3,19-dioxo-5alpha-androstanone + reduced [NADPH--hemoprotein reductase] + O2 = 17beta-hydroxy-3-oxo-19-nor-5alpha-androst-1-ene + formate + oxidized [NADPH--hemoprotein reductase] + H2O + 2 H(+). It functions in the pathway steroid hormone biosynthesis. Functionally, a cytochrome P450 monooxygenase that catalyzes the conversion of C19 androgens, androst-4-ene-3,17-dione (androstenedione) and testosterone to the C18 estrogens, estrone and estradiol, respectively. Catalyzes three successive oxidations of C19 androgens: two conventional oxidations at C19 yielding 19-hydroxy and 19-oxo/19-aldehyde derivatives, followed by a third oxidative aromatization step that involves C1-beta hydrogen abstraction combined with cleavage of the C10-C19 bond to yield a phenolic A ring and formic acid. Alternatively, the third oxidative reaction yields a 19-norsteroid and formic acid. Converts dihydrotestosterone to delta1,10-dehydro 19-nordihydrotestosterone and may play a role in homeostasis of this potent androgen. Also displays 2-hydroxylase activity toward estrone. Mechanistically, uses molecular oxygen inserting one oxygen atom into a substrate, and reducing the second into a water molecule, with two electrons provided by NADPH via cytochrome P450 reductase (CPR; NADPH-ferrihemoprotein reductase). The sequence is that of Aromatase (CYP19A1) from Bos taurus (Bovine).